A 443-amino-acid polypeptide reads, in one-letter code: Serine/threonine-protein phosphatase 2A 55 kDa regulatory subunit B beta isoform (443 aa).

WD repeat units lie at residues 22–61, 87–128, 171–209, 220–260, 279–317, 334–375, and 410–443; these read TEAD…KSQP, EIEE…KRPE, AHTY…RSFN, ELTE…LCDN, EIIS…KPLE, ENDC…DVTL, and DFSK…DKVN.

This sequence belongs to the phosphatase 2A regulatory subunit B family. PP2A consists of a common heterodimeric core enzyme, composed of a 36 kDa catalytic subunit (subunit C) and a 65 kDa constant regulatory subunit (PR65 or subunit A), that associates with a variety of regulatory subunits.

It localises to the cytoplasm. It is found in the cytoskeleton. Its subcellular location is the membrane. The B regulatory subunit might modulate substrate selectivity and catalytic activity, and might also direct the localization of the catalytic enzyme to a particular subcellular compartment. In Carassius auratus (Goldfish), this protein is Serine/threonine-protein phosphatase 2A 55 kDa regulatory subunit B beta isoform (ppp2r2b).